The following is a 313-amino-acid chain: MRVVFMGTPDFAVPSLKALVEAGHDVLAVVTQPDRPRGRGRKETPPPVKQAAHALNIPVFQPLKIKDADFTALLKKLSPQVIAVVAYGRIIPPDILTIPKYGCINVHASLLPKYRGAAPIHWAVINGEKETGITTMFMDEGLDTGDMILQEAVAITEEDTAGTVHDALAVLGARLLVQTLELVGQGMAPRVPQQGIPSYAPPLKTEDELIRWDRTARDIFNQIRGMNPWPGARTYFSGKVLKIWRAAVVEEEGAALKPGQVMSAGRNAIVVGTGRGRIAVTELQLQGARRLSAGDFLRGTPMPEGIVLGEACS.

109–112 serves as a coordination point for (6S)-5,6,7,8-tetrahydrofolate; it reads SLLP.

Belongs to the Fmt family.

It catalyses the reaction L-methionyl-tRNA(fMet) + (6R)-10-formyltetrahydrofolate = N-formyl-L-methionyl-tRNA(fMet) + (6S)-5,6,7,8-tetrahydrofolate + H(+). Attaches a formyl group to the free amino group of methionyl-tRNA(fMet). The formyl group appears to play a dual role in the initiator identity of N-formylmethionyl-tRNA by promoting its recognition by IF2 and preventing the misappropriation of this tRNA by the elongation apparatus. The protein is Methionyl-tRNA formyltransferase of Pelotomaculum thermopropionicum (strain DSM 13744 / JCM 10971 / SI).